A 212-amino-acid polypeptide reads, in one-letter code: Ribosomal RNA large subunit methyltransferase E (212 aa).

Basic residues predominate over residues 1–10; it reads MATCRRRRRG. Residues 1–24 are disordered; that stretch reads MATCRRRRRGCNSQARRSRHESDP. S-adenosyl-L-methionine-binding residues include glycine 66, tryptophan 68, aspartate 86, aspartate 102, and aspartate 127. Residue lysine 167 is the Proton acceptor of the active site.

This sequence belongs to the class I-like SAM-binding methyltransferase superfamily. RNA methyltransferase RlmE family.

It is found in the cytoplasm. The enzyme catalyses uridine(2552) in 23S rRNA + S-adenosyl-L-methionine = 2'-O-methyluridine(2552) in 23S rRNA + S-adenosyl-L-homocysteine + H(+). Specifically methylates the uridine in position 2552 of 23S rRNA at the 2'-O position of the ribose in the fully assembled 50S ribosomal subunit. The sequence is that of Ribosomal RNA large subunit methyltransferase E from Halorhodospira halophila (strain DSM 244 / SL1) (Ectothiorhodospira halophila (strain DSM 244 / SL1)).